The primary structure comprises 148 residues: Ribosomal RNA large subunit methyltransferase H 2 (148 aa).

S-adenosyl-L-methionine is bound by residues L74, G106, and 125–130 (FSKMTF).

This sequence belongs to the RNA methyltransferase RlmH family. As to quaternary structure, homodimer.

Its subcellular location is the cytoplasm. The catalysed reaction is pseudouridine(1915) in 23S rRNA + S-adenosyl-L-methionine = N(3)-methylpseudouridine(1915) in 23S rRNA + S-adenosyl-L-homocysteine + H(+). Its function is as follows. Specifically methylates the pseudouridine at position 1915 (m3Psi1915) in 23S rRNA. This is Ribosomal RNA large subunit methyltransferase H 2 from Caldanaerobacter subterraneus subsp. tengcongensis (strain DSM 15242 / JCM 11007 / NBRC 100824 / MB4) (Thermoanaerobacter tengcongensis).